An 826-amino-acid chain; its full sequence is (2S)-3-sulfopropanediol dehydratase (826 aa).

The PFL domain occupies 33–695; the sequence is PRVNRLRQAF…NTNASIDGRK (663 aa). Cysteine 464 (cysteine radical intermediate) is an active-site residue. Glutamate 466 (proton acceptor) is an active-site residue. In terms of domain architecture, Glycine radical spans 706–826; it reads PVHTDGGSHD…DLIQRTELHF (121 aa). A Glycine radical modification is found at glycine 802.

It belongs to the glycyl radical enzyme (GRE) family. Post-translationally, requires the activating protein HpfH to generate the key active site glycyl radical on Gly-802 that is involved in catalysis.

It carries out the reaction (2S)-3-sulfopropanediol = 3-oxopropane-1-sulfonate + H2O. It functions in the pathway organosulfur degradation; alkanesulfonate degradation. In terms of biological role, involved in the degradation of the organosulfur compound 2(S)-dihydroxypropanesulfonate (DHPS). Catalyzes the radical-mediated dehydration of DHPS to produce 3-sulfopropionaldehyde (3-oxopropane-1-sulfonate). The polypeptide is (2S)-3-sulfopropanediol dehydratase (Klebsiella oxytoca).